Reading from the N-terminus, the 303-residue chain is Porphobilinogen deaminase (303 aa).

Cysteine 240 bears the S-(dipyrrolylmethanemethyl)cysteine mark.

It belongs to the HMBS family. As to quaternary structure, monomer. The cofactor is dipyrromethane.

The enzyme catalyses 4 porphobilinogen + H2O = hydroxymethylbilane + 4 NH4(+). The protein operates within porphyrin-containing compound metabolism; protoporphyrin-IX biosynthesis; coproporphyrinogen-III from 5-aminolevulinate: step 2/4. Functionally, tetrapolymerization of the monopyrrole PBG into the hydroxymethylbilane pre-uroporphyrinogen in several discrete steps. The protein is Porphobilinogen deaminase of Stenotrophomonas maltophilia (strain R551-3).